Here is a 436-residue protein sequence, read N- to C-terminus: Acetylcholine receptor non-alpha chain (436 aa).

Residues 1–195 are Extracellular-facing; the sequence is IIDVHEIDQI…IFYLELRRKP (195 aa). N-linked (GlcNAc...) asparagine glycosylation is present at Asn62. Cys89 and Cys103 form a disulfide bridge. N-linked (GlcNAc...) asparagine glycosylation is present at Asn140. The next 3 helical transmembrane spans lie at 196–219, 227–245, and 261–280; these read LFYTVNLVFPCVGISFLTIVAFYL, VTLCILILVALTVFYLLLK, and YLLFTMIMVSLSVLVTVISL. The Cytoplasmic segment spans residues 281–404; that stretch reads NLHFRRPSTH…WKFVARVLDR (124 aa). Residues 405–423 form a helical membrane-spanning segment; sequence LFLLLFSIACFLGTILILF.

It belongs to the ligand-gated ion channel (TC 1.A.9) family. Acetylcholine receptor (TC 1.A.9.1) subfamily.

Its subcellular location is the postsynaptic cell membrane. The protein localises to the cell membrane. After binding acetylcholine, the AChR responds by an extensive change in conformation that affects all subunits and leads to opening of an ion-conducting channel across the plasma membrane. This is Acetylcholine receptor non-alpha chain from Onchocerca volvulus.